The chain runs to 623 residues: DNA mismatch repair protein MutL (623 aa).

Residues 353–368 are compositionally biased toward polar residues; sequence AQQSAPRPANSYSPAS. The segment at 353–389 is disordered; sequence AQQSAPRPANSYSPASWRTAPPAPRSEWSPQTAQTAH.

The protein belongs to the DNA mismatch repair MutL/HexB family.

In terms of biological role, this protein is involved in the repair of mismatches in DNA. It is required for dam-dependent methyl-directed DNA mismatch repair. May act as a 'molecular matchmaker', a protein that promotes the formation of a stable complex between two or more DNA-binding proteins in an ATP-dependent manner without itself being part of a final effector complex. The sequence is that of DNA mismatch repair protein MutL from Brucella melitensis biotype 2 (strain ATCC 23457).